A 265-amino-acid chain; its full sequence is Inositol-1-monophosphatase (265 aa).

The Mg(2+) site is built by glutamate 69, aspartate 87, isoleucine 89, and aspartate 90. Substrate is bound at residue glutamate 69. Residues 89–92 (IDGT), arginine 185, and aspartate 214 each bind substrate. Aspartate 214 serves as a coordination point for Mg(2+).

Belongs to the inositol monophosphatase superfamily. Requires Mg(2+) as cofactor.

It carries out the reaction a myo-inositol phosphate + H2O = myo-inositol + phosphate. It catalyses the reaction a ribonucleoside 5'-phosphate + H2O = a ribonucleoside + phosphate. Hydrolyzes myo-inositol monophosphate. Catalyzes the dephosphorylation of GMP and IMP. The sequence is that of Inositol-1-monophosphatase from Bacillus subtilis (strain 168).